Reading from the N-terminus, the 105-residue chain is Pyrimidine/purine nucleoside phosphorylase (105 aa).

Belongs to the nucleoside phosphorylase PpnP family.

The enzyme catalyses a purine D-ribonucleoside + phosphate = a purine nucleobase + alpha-D-ribose 1-phosphate. It catalyses the reaction adenosine + phosphate = alpha-D-ribose 1-phosphate + adenine. The catalysed reaction is cytidine + phosphate = cytosine + alpha-D-ribose 1-phosphate. It carries out the reaction guanosine + phosphate = alpha-D-ribose 1-phosphate + guanine. The enzyme catalyses inosine + phosphate = alpha-D-ribose 1-phosphate + hypoxanthine. It catalyses the reaction thymidine + phosphate = 2-deoxy-alpha-D-ribose 1-phosphate + thymine. The catalysed reaction is uridine + phosphate = alpha-D-ribose 1-phosphate + uracil. It carries out the reaction xanthosine + phosphate = alpha-D-ribose 1-phosphate + xanthine. In terms of biological role, catalyzes the phosphorolysis of diverse nucleosides, yielding D-ribose 1-phosphate and the respective free bases. Can use uridine, adenosine, guanosine, cytidine, thymidine, inosine and xanthosine as substrates. Also catalyzes the reverse reactions. This is Pyrimidine/purine nucleoside phosphorylase from Cupriavidus necator (strain ATCC 17699 / DSM 428 / KCTC 22496 / NCIMB 10442 / H16 / Stanier 337) (Ralstonia eutropha).